A 311-amino-acid polypeptide reads, in one-letter code: HPr kinase/phosphorylase (311 aa).

Catalysis depends on residues His-138 and Lys-159. 153-160 (GDSGIGKS) lines the ATP pocket. A Mg(2+)-binding site is contributed by Ser-160. Residue Asp-177 is the Proton acceptor; for phosphorylation activity. Proton donor; for dephosphorylation activity of the active site. An important for the catalytic mechanism of both phosphorylation and dephosphorylation region spans residues 201 to 210 (LEIRGVGIID). Glu-202 contacts Mg(2+). Arg-243 is an active-site residue. Residues 264–269 (PVKTGR) form an important for the catalytic mechanism of dephosphorylation region.

This sequence belongs to the HPrK/P family. Homohexamer. Mg(2+) is required as a cofactor.

It catalyses the reaction [HPr protein]-L-serine + ATP = [HPr protein]-O-phospho-L-serine + ADP + H(+). The catalysed reaction is [HPr protein]-O-phospho-L-serine + phosphate + H(+) = [HPr protein]-L-serine + diphosphate. Its function is as follows. Catalyzes the ATP- as well as the pyrophosphate-dependent phosphorylation of a specific serine residue in HPr, a phosphocarrier protein of the phosphoenolpyruvate-dependent sugar phosphotransferase system (PTS). HprK/P also catalyzes the pyrophosphate-producing, inorganic phosphate-dependent dephosphorylation (phosphorolysis) of seryl-phosphorylated HPr (P-Ser-HPr). The two antagonistic activities of HprK/P are regulated by several intracellular metabolites, which change their concentration in response to the absence or presence of rapidly metabolisable carbon sources (glucose, fructose, etc.) in the growth medium. Therefore, by controlling the phosphorylation state of HPr, HPrK/P is a sensor enzyme that plays a major role in the regulation of carbon metabolism and sugar transport: it mediates carbon catabolite repression (CCR), and regulates PTS-catalyzed carbohydrate uptake and inducer exclusion. This is HPr kinase/phosphorylase from Streptococcus agalactiae serotype Ia (strain ATCC 27591 / A909 / CDC SS700).